Consider the following 445-residue polypeptide: Putative ankyrin repeat protein L797 (445 aa).

4 ANK repeats span residues phenylalanine 73–serine 102, asparagine 285–glycine 314, asparagine 315–glutamine 344, and leucine 346–isoleucine 375.

The protein is Putative ankyrin repeat protein L797 of Acanthamoeba polyphaga (Amoeba).